A 491-amino-acid polypeptide reads, in one-letter code: Fatty acyl-CoA reductase 1 (491 aa).

Belongs to the fatty acyl-CoA reductase family. In terms of tissue distribution, expressed in the endodermal cell layer surrounding the central vasculature in roots. Expressed in the hilum region of seeds. Expressed in lateral root tips, cotyledons, the shoot apex, young leaves, petals, stamen filaments, and receptacle of siliques.

The catalysed reaction is a long-chain fatty acyl-CoA + 2 NADPH + 2 H(+) = a long-chain primary fatty alcohol + 2 NADP(+) + CoA. In terms of biological role, catalyzes the reduction of fatty acyl-CoA to fatty alcohols. Catalyzes specifically the formation of C18:0 and C22:0 fatty alcohols. Provides the fatty alcohols required for synthesis of suberin in roots, seed coat and wound-induced leaf tissue. Provides the fatty alcohols required for synthesis of alkyl hydroxycinnamates in root waxes. The sequence is that of Fatty acyl-CoA reductase 1 from Arabidopsis thaliana (Mouse-ear cress).